Consider the following 376-residue polypeptide: Phosphoserine aminotransferase (376 aa).

Arginine 54 provides a ligand contact to L-glutamate. Residues alanine 88–threonine 89, tryptophan 115, threonine 165, aspartate 186, and glutamine 209 each bind pyridoxal 5'-phosphate. N6-(pyridoxal phosphate)lysine is present on lysine 210. Asparagine 251 to threonine 252 contributes to the pyridoxal 5'-phosphate binding site.

The protein belongs to the class-V pyridoxal-phosphate-dependent aminotransferase family. SerC subfamily. As to quaternary structure, homodimer. Pyridoxal 5'-phosphate serves as cofactor.

The protein localises to the cytoplasm. It catalyses the reaction O-phospho-L-serine + 2-oxoglutarate = 3-phosphooxypyruvate + L-glutamate. The catalysed reaction is 4-(phosphooxy)-L-threonine + 2-oxoglutarate = (R)-3-hydroxy-2-oxo-4-phosphooxybutanoate + L-glutamate. It participates in amino-acid biosynthesis; L-serine biosynthesis; L-serine from 3-phospho-D-glycerate: step 2/3. It functions in the pathway cofactor biosynthesis; pyridoxine 5'-phosphate biosynthesis; pyridoxine 5'-phosphate from D-erythrose 4-phosphate: step 3/5. Functionally, catalyzes the reversible conversion of 3-phosphohydroxypyruvate to phosphoserine and of 3-hydroxy-2-oxo-4-phosphonooxybutanoate to phosphohydroxythreonine. The polypeptide is Phosphoserine aminotransferase (Rhodopirellula baltica (strain DSM 10527 / NCIMB 13988 / SH1)).